The primary structure comprises 329 residues: MASQLTDAFARKFYYLRLSITDVCNFRCTYCLPDGYKPSGVTNKGFLTVDEIRRVTRAFASLGTEKVRLTGGEPSLRRDFTDIIAAVRENDAIRQIAVTTNGYRLERDVANWRDAGLTGINVSVDSLDARQFHAITGQDKFNQVMAGIDAAFEAGFEKVKVNTVLMRDVNHHQLDTFLNWIQHRPIQLRFIELMETGEGIELFRKHHISGQVLRDELLRRGWIHQLRQRSDGPAQVFCHPDYAGEIGLIMPYEKDFCATCNRLRVSSIGKLHLCLFGEGGVNLRDLLEDDTQQQALEARISAALREKKQTHFLHQNNTGITQNLSYIGG.

A Radical SAM core domain is found at 8 to 234; that stretch reads AFARKFYYLR…QLRQRSDGPA (227 aa). A GTP-binding site is contributed by R17. Residues C24 and C28 each coordinate [4Fe-4S] cluster. Y30 contributes to the S-adenosyl-L-methionine binding site. Residue C31 coordinates [4Fe-4S] cluster. R68 is a binding site for GTP. S-adenosyl-L-methionine is bound at residue G72. T99 is a GTP binding site. Residue S123 participates in S-adenosyl-L-methionine binding. K160 contributes to the GTP binding site. Residue M194 participates in S-adenosyl-L-methionine binding. The [4Fe-4S] cluster site is built by C257 and C260. 262-264 provides a ligand contact to GTP; that stretch reads RLR. [4Fe-4S] cluster is bound at residue C274.

It belongs to the radical SAM superfamily. MoaA family. Monomer and homodimer. [4Fe-4S] cluster is required as a cofactor.

It catalyses the reaction GTP + AH2 + S-adenosyl-L-methionine = (8S)-3',8-cyclo-7,8-dihydroguanosine 5'-triphosphate + 5'-deoxyadenosine + L-methionine + A + H(+). The protein operates within cofactor biosynthesis; molybdopterin biosynthesis. Its function is as follows. Catalyzes the cyclization of GTP to (8S)-3',8-cyclo-7,8-dihydroguanosine 5'-triphosphate. The sequence is that of GTP 3',8-cyclase from Escherichia coli O7:K1 (strain IAI39 / ExPEC).